A 170-amino-acid chain; its full sequence is Adenine phosphoribosyltransferase (170 aa).

The protein belongs to the purine/pyrimidine phosphoribosyltransferase family. As to quaternary structure, homodimer.

It is found in the cytoplasm. The enzyme catalyses AMP + diphosphate = 5-phospho-alpha-D-ribose 1-diphosphate + adenine. Its pathway is purine metabolism; AMP biosynthesis via salvage pathway; AMP from adenine: step 1/1. Catalyzes a salvage reaction resulting in the formation of AMP, that is energically less costly than de novo synthesis. The polypeptide is Adenine phosphoribosyltransferase (Clostridioides difficile (strain 630) (Peptoclostridium difficile)).